A 129-amino-acid polypeptide reads, in one-letter code: Intraflagellar transport protein 20 homolog (129 aa).

Positions 89–121 (VLLQMTIRELTVEKERLRVELEAVRKIEKEQDE) form a coiled coil.

As to quaternary structure, component of the IFT complex B composed of at least che-2, che-13, dyf-1, dyf-3, dyf-6, dyf-11, dyf-13, ift-20, ift-74, ift-81, ifta-2, osm-1, osm-5 and osm-6.

It is found in the cell projection. It localises to the cilium. Its function is as follows. Component of the intraflagellar transport (IFT) complex B required for transport of proteins in the motile cilium. Required for ciliary entrance and transport of specific ciliary cargo proteins such as che-3 which are related to motility. This Caenorhabditis elegans protein is Intraflagellar transport protein 20 homolog.